The primary structure comprises 166 residues: Regulator of ribonuclease activity A (166 aa).

The protein belongs to the RraA family. As to quaternary structure, homotrimer. Binds to both RNA-binding sites in the C-terminal region of Rne and to RhlB.

It is found in the cytoplasm. In terms of biological role, globally modulates RNA abundance by binding to RNase E (Rne) and regulating its endonucleolytic activity. Can modulate Rne action in a substrate-dependent manner by altering the composition of the degradosome. Modulates RNA-binding and helicase activities of the degradosome. This is Regulator of ribonuclease activity A from Mannheimia succiniciproducens (strain KCTC 0769BP / MBEL55E).